We begin with the raw amino-acid sequence, 99 residues long: Putative septation protein SpoVG (99 aa).

The protein belongs to the SpoVG family.

Could be involved in septation. The chain is Putative septation protein SpoVG from Exiguobacterium sp. (strain ATCC BAA-1283 / AT1b).